The sequence spans 32 residues: AGGKSTCCPCAMCKYTAGCPWGQCAHHCGCSE.

This sequence belongs to the sea anemone short toxin (type III) family. Contains 4 disulfide bonds.

It localises to the secreted. The protein resides in the nematocyst. Its function is as follows. Binds specifically to sodium channels (Nav) of the axonal membrane of crayfish and prolongs the falling phase of the action potential. It also increases the maximum rates of rise of both action potential and resting potential. Is only active on crustaceans. This Entacmaea quadricolor (Bubble-tip anemone) protein is Delta-actitoxin-Eqd1a.